We begin with the raw amino-acid sequence, 239 residues long: LexA repressor (239 aa).

Positions 27-47 (FDEMKDALDLASKSGIHRLIT) form a DNA-binding region, H-T-H motif. Active-site for autocatalytic cleavage activity residues include S159 and K197.

The protein belongs to the peptidase S24 family. In terms of assembly, homodimer.

The catalysed reaction is Hydrolysis of Ala-|-Gly bond in repressor LexA.. In terms of biological role, represses a number of genes involved in the response to DNA damage (SOS response), including recA and lexA. In the presence of single-stranded DNA, RecA interacts with LexA causing an autocatalytic cleavage which disrupts the DNA-binding part of LexA, leading to derepression of the SOS regulon and eventually DNA repair. The sequence is that of LexA repressor from Rhizobium radiobacter (Agrobacterium tumefaciens).